Reading from the N-terminus, the 81-residue chain is uncharacterized protein (81 aa).

This is an uncharacterized protein from Escherichia coli (strain K12).